We begin with the raw amino-acid sequence, 60 residues long: Mastoparan-VB2 (60 aa).

Residues 1–27 (MKNTILLLFTAFIFLMGFFGMSADALA) form the signal peptide. 4 AXPX repeats span residues 27–30 (ADPK), 31–34 (ADPL), 35–38 (AGPF), and 41–44 (ADPD). A propeptide spanning residues 28-45 (DPKADPLAGPFPDADPDP) is cleaved from the precursor. Leucine amide is present on L59.

It belongs to the MCD family. Mastoparan subfamily. Expressed by the venom gland.

The protein localises to the secreted. Its subcellular location is the target cell membrane. Functionally, antimicrobial peptide. Shows activity against both Gram-positive and -negative bacteria, as well against fungi. Also promotes moderate mast cell degranulation. Does not show hemolytic activity on rabbit and human erythrocytes. Its mast cell degranulation activity may be related to the activation of G-protein coupled receptors in mast cells as well as interaction with other proteins located in cell endosomal membranes in the mast cells. This is Mastoparan-VB2 from Vespa bicolor (Black shield wasp).